The following is a 770-amino-acid chain: ATP-dependent RNA helicase HCA4 (770 aa).

The short motif at 41–69 (KFFKDLPISDPTLKGLRESSFIKLTEIQA) is the Q motif element. The 175-residue stretch at 72 to 246 (IPVSLQGHDV…RLSLTDYKTV (175 aa)) folds into the Helicase ATP-binding domain. An ATP-binding site is contributed by 85-92 (AKTGSGKT). Positions 194–197 (DEAD) match the DEAD box motif. Positions 278-437 (KLDILFSFIK…SIKPQLQSLL (160 aa)) constitute a Helicase C-terminal domain. S692, S710, S714, and S743 each carry phosphoserine. The segment at 705–724 (GTGNLSDDMSDGDMPDSEGH) is disordered.

This sequence belongs to the DEAD box helicase family. DDX10/DBP4 subfamily. In terms of assembly, interacts with the U3 and U14 snoRNAs. Associates with pre-ribosomal complexes.

It localises to the nucleus. It is found in the nucleolus. It carries out the reaction ATP + H2O = ADP + phosphate + H(+). Its function is as follows. ATP-dependent RNA helicase required for ribosome biogenesis. Involved in the release of U14 snoRNA in pre-ribosomal complexes. Required for pre-rRNA cleavage at site A2. The sequence is that of ATP-dependent RNA helicase HCA4 (HCA4) from Saccharomyces cerevisiae (strain ATCC 204508 / S288c) (Baker's yeast).